We begin with the raw amino-acid sequence, 283 residues long: Elongation factor Ts (283 aa).

The tract at residues 80–83 is involved in Mg(2+) ion dislocation from EF-Tu; sequence TDFV.

The protein belongs to the EF-Ts family.

Its subcellular location is the cytoplasm. In terms of biological role, associates with the EF-Tu.GDP complex and induces the exchange of GDP to GTP. It remains bound to the aminoacyl-tRNA.EF-Tu.GTP complex up to the GTP hydrolysis stage on the ribosome. This chain is Elongation factor Ts, found in Haemophilus ducreyi (strain 35000HP / ATCC 700724).